The sequence spans 605 residues: Phosphoenolpyruvate carboxykinase (ATP) (605 aa).

Positions 27 to 48 (SGPSSSFINNNNSNNNNNKSSN) are enriched in low complexity. The segment at 27–67 (SGPSSSFINNNNSNNNNNKSSNMFNHDHVNKTNLHPGGVKP) is disordered. 307–314 (GLSGTGKT) contributes to the ATP binding site.

Belongs to the phosphoenolpyruvate carboxykinase (ATP) family.

The enzyme catalyses oxaloacetate + ATP = phosphoenolpyruvate + ADP + CO2. Its pathway is carbohydrate biosynthesis; gluconeogenesis. In Neurospora crassa (strain ATCC 24698 / 74-OR23-1A / CBS 708.71 / DSM 1257 / FGSC 987), this protein is Phosphoenolpyruvate carboxykinase (ATP) (acu-6).